Here is a 676-residue protein sequence, read N- to C-terminus: Envelope fusion protein (676 aa).

The first 16 residues, 1 to 16 (MSPLALIVLLAWHATA), serve as a signal peptide directing secretion. N-linked (GlcNAc...) asparagine; by host glycosylation is found at Asn-76 and Asn-87. Residues 169–215 (ARELHDLAKTSNALNEQIKEVTDELVNIAKFEEHKQCLERQRDDLCG) are a coiled coil. Asn-266, Asn-469, Asn-505, and Asn-548 each carry an N-linked (GlcNAc...) asparagine; by host glycan. A helical transmembrane segment spans residues 577–597 (CATAEAVVACVVLFLVALLLF). An N-linked (GlcNAc...) asparagine; by host glycan is attached at Asn-628.

In terms of processing, N-glycosylated.

The protein resides in the virion membrane. It localises to the host cell membrane. Envelope glycoprotein which mediates the fusion of viral and host endosomal membranes leading to virus entry into the host cell. The protein is Envelope fusion protein of Lepidoptera (butterflies and moths).